A 330-amino-acid polypeptide reads, in one-letter code: DNA-directed RNA polymerase subunit alpha (330 aa).

The alpha N-terminal domain (alpha-NTD) stretch occupies residues 1 to 236 (MQGSVTEFLK…EQLDAFVDLR (236 aa)). The segment at 250–330 (FDPILLRPVD…NWPPASIAED (81 aa)) is alpha C-terminal domain (alpha-CTD).

It belongs to the RNA polymerase alpha chain family. Homodimer. The RNAP catalytic core consists of 2 alpha, 1 beta, 1 beta' and 1 omega subunit. When a sigma factor is associated with the core the holoenzyme is formed, which can initiate transcription.

The catalysed reaction is RNA(n) + a ribonucleoside 5'-triphosphate = RNA(n+1) + diphosphate. DNA-dependent RNA polymerase catalyzes the transcription of DNA into RNA using the four ribonucleoside triphosphates as substrates. This chain is DNA-directed RNA polymerase subunit alpha, found in Vibrio cholerae serotype O1 (strain ATCC 39315 / El Tor Inaba N16961).